The primary structure comprises 275 residues: Dihydroxyacetone phosphatase (275 aa).

The Nucleophile role is filled by aspartate 10. Mg(2+)-binding residues include aspartate 10, aspartate 12, and aspartate 206. The active-site Proton donor/acceptor is aspartate 12.

The protein belongs to the HAD-like hydrolase superfamily. In terms of assembly, homohexamer. Mg(2+) is required as a cofactor.

The catalysed reaction is dihydroxyacetone phosphate + H2O = dihydroxyacetone + phosphate. Its function is as follows. Catalyzes dephosphorylation of dihydroxyacetone phosphate (DHAP) to produce 1,3-dihydroxyacetone (DHA). Is the main enzyme responsible for DHA production from catabolism of sugars (glucose, fructose, and sucrose) in C.glutamicum. Displays no activity toward nucleoside monophosphates (AMP, CMP, GMP, or UMP). The protein is Dihydroxyacetone phosphatase of Corynebacterium glutamicum (strain R).